The chain runs to 410 residues: MWAFPELPLPLPLLVNLIGSLLGFVATVTLIPAFRSHFIAARLCGQDLNKLSQQQIPESQGVISGAVFLIILFCFIPFPFLNCFVEEQCKAFPHHEFVALIGALLAICCMIFLGFADDVLNLRWRHKLLLPTAASLPLLMVYFTNFGNTTIVVPKPFRWILGLHLDLGILYYVYMGLLAVFCTNAINILAGINGLEAGQSLVISASIIVFNLVELEGDYRDDHIFSLYFMIPFFFTTLGLLYHNWYPSRVFVGDTFCYFAGMTFAVVGILGHFSKTMLLFFMPQVFNFLYSLPQLFHIIPCPRHRMPRLNAKTGKLEMSYSKFKTKNLSFLGTFILKVAENLRLVTVHQGESEDGAFTECNNMTLINLLLKVFGPIHERNLTLLLLLLQVLSSAATFSIRYQLVRLFYDV.

The Lumenal portion of the chain corresponds to 1 to 10 (MWAFPELPLP). The chain crosses the membrane as a helical span at residues 11 to 40 (LPLLVNLIGSLLGFVATVTLIPAFRSHFIA). Over 41–60 (ARLCGQDLNKLSQQQIPESQ) the chain is Cytoplasmic. UDP-N-acetyl-alpha-D-glucosamine is bound by residues 46 to 48 (QDL) and glutamate 58. A helical membrane pass occupies residues 61-80 (GVISGAVFLIILFCFIPFPF). Over 81–93 (LNCFVEEQCKAFP) the chain is Lumenal. A helical transmembrane segment spans residues 94-120 (HHEFVALIGALLAICCMIFLGFADDVL). Topologically, residues 121–123 (NLR) are cytoplasmic. The chain crosses the membrane as a helical span at residues 124 to 145 (WRHKLLLPTAASLPLLMVYFTN). Lysine 127 lines the dolichyl phosphate pocket. Residues 146–168 (FGNTTIVVPKPFRWILGLHLDLG) lie on the Lumenal side of the membrane. The N-linked (GlcNAc...) asparagine glycan is linked to asparagine 148. A helical transmembrane segment spans residues 169 to 188 (ILYYVYMGLLAVFCTNAINI). 180 to 188 (VFCTNAINI) contacts dolichyl phosphate. Asparagine 187 lines the Mg(2+) pocket. Residues 189–194 (LAGING) are Cytoplasmic-facing. Asparagine 193 is a binding site for UDP-N-acetyl-alpha-D-glucosamine. A helical membrane pass occupies residues 195-215 (LEAGQSLVISASIIVFNLVEL). Topologically, residues 216-220 (EGDYR) are lumenal. A helical membrane pass occupies residues 221 to 244 (DDHIFSLYFMIPFFFTTLGLLYHN). Over 245–252 (WYPSRVFV) the chain is Cytoplasmic. Residues 253–271 (GDTFCYFAGMTFAVVGILG) traverse the membrane as a helical segment. Position 254 (aspartate 254) interacts with Mg(2+). Residues 272 to 273 (HF) lie on the Lumenal side of the membrane. A helical membrane pass occupies residues 274-295 (SKTMLLFFMPQVFNFLYSLPQL). The Cytoplasmic segment spans residues 296–377 (FHIIPCPRHR…LLLKVFGPIH (82 aa)). 303–305 (RHR) lines the UDP-N-acetyl-alpha-D-glucosamine pocket. A helical membrane pass occupies residues 378-402 (ERNLTLLLLLLQVLSSAATFSIRYQ). Topologically, residues 403 to 410 (LVRLFYDV) are lumenal.

This sequence belongs to the glycosyltransferase 4 family. As to quaternary structure, homodimer. Mg(2+) serves as cofactor.

The protein localises to the endoplasmic reticulum membrane. It catalyses the reaction a di-trans,poly-cis-dolichyl phosphate + UDP-N-acetyl-alpha-D-glucosamine = an N-acetyl-alpha-D-glucosaminyl-diphospho-di-trans,poly-cis-dolichol + UMP. The protein operates within protein modification; protein glycosylation. With respect to regulation, inhibited by natural nucleoside antibiotic tunicamycin, which acts as a structural analog and competitor of UDP-GlcNAc. UDP-N-acetylglucosamine--dolichyl-phosphate N-acetylglucosaminephosphotransferase that operates in the biosynthetic pathway of dolichol-linked oligosaccharides, the glycan precursors employed in protein asparagine (N)-glycosylation. The assembly of dolichol-linked oligosaccharides begins on the cytosolic side of the endoplasmic reticulum membrane and finishes in its lumen. The sequential addition of sugars to dolichol pyrophosphate produces dolichol-linked oligosaccharides containing fourteen sugars, including two GlcNAcs, nine mannoses and three glucoses. Once assembled, the oligosaccharide is transferred from the lipid to nascent proteins by oligosaccharyltransferases. Catalyzes the initial step of dolichol-linked oligosaccharide biosynthesis, transfering GlcNAc-1-P from cytosolic UDP-GlcNAc onto the carrier lipid dolichyl phosphate (P-dolichol), yielding GlcNAc-P-P-dolichol embedded in the cytoplasmic leaflet of the endoplasmic reticulum membrane. This Mus musculus (Mouse) protein is UDP-N-acetylglucosamine--dolichyl-phosphate N-acetylglucosaminephosphotransferase.